A 323-amino-acid polypeptide reads, in one-letter code: GTP 3',8-cyclase (323 aa).

Residues 5–228 (GFGRKVDYLR…TVLRDTSSPA (224 aa)) enclose the Radical SAM core domain. Arg14 lines the GTP pocket. The [4Fe-4S] cluster site is built by Cys21 and Cys25. Tyr27 provides a ligand contact to S-adenosyl-L-methionine. A [4Fe-4S] cluster-binding site is contributed by Cys28. Arg64 is a binding site for GTP. Residue Gly68 coordinates S-adenosyl-L-methionine. Thr95 lines the GTP pocket. Ser119 contacts S-adenosyl-L-methionine. GTP is bound at residue Lys155. Met189 is an S-adenosyl-L-methionine binding site. [4Fe-4S] cluster-binding residues include Cys250 and Cys253. 255–257 (RIR) is a binding site for GTP. Cys267 is a binding site for [4Fe-4S] cluster. Residues 302 to 313 (KNKWSQKDDNEV) show a composition bias toward basic and acidic residues. Residues 302-323 (KNKWSQKDDNEVSTRAFYQTGG) are disordered.

The protein belongs to the radical SAM superfamily. MoaA family. Monomer and homodimer. The cofactor is [4Fe-4S] cluster.

The catalysed reaction is GTP + AH2 + S-adenosyl-L-methionine = (8S)-3',8-cyclo-7,8-dihydroguanosine 5'-triphosphate + 5'-deoxyadenosine + L-methionine + A + H(+). It functions in the pathway cofactor biosynthesis; molybdopterin biosynthesis. Its function is as follows. Catalyzes the cyclization of GTP to (8S)-3',8-cyclo-7,8-dihydroguanosine 5'-triphosphate. This Aliarcobacter butzleri (strain RM4018) (Arcobacter butzleri) protein is GTP 3',8-cyclase.